Here is a 74-residue protein sequence, read N- to C-terminus: Protein SlyX homolog (74 aa).

The tract at residues 52-74 (LKQMQENQSTDSDPADEPPPPHY) is disordered.

The protein belongs to the SlyX family.

The sequence is that of Protein SlyX homolog from Idiomarina loihiensis (strain ATCC BAA-735 / DSM 15497 / L2-TR).